The primary structure comprises 218 residues: Pyridoxine/pyridoxamine 5'-phosphate oxidase (218 aa).

Substrate contacts are provided by residues 14 to 17 and Lys-72; that span reads RREY. Residues 67-72, 82-83, Arg-88, Lys-89, and Gln-111 contribute to the FMN site; these read RIVLLK and YT. Positions 129, 133, and 137 each coordinate substrate. FMN is bound by residues 146-147 and Trp-191; that span reads QS. 197–199 serves as a coordination point for substrate; it reads RLH. Position 201 (Arg-201) interacts with FMN.

This sequence belongs to the pyridoxamine 5'-phosphate oxidase family. Homodimer. Requires FMN as cofactor.

It carries out the reaction pyridoxamine 5'-phosphate + O2 + H2O = pyridoxal 5'-phosphate + H2O2 + NH4(+). The enzyme catalyses pyridoxine 5'-phosphate + O2 = pyridoxal 5'-phosphate + H2O2. It functions in the pathway cofactor metabolism; pyridoxal 5'-phosphate salvage; pyridoxal 5'-phosphate from pyridoxamine 5'-phosphate: step 1/1. The protein operates within cofactor metabolism; pyridoxal 5'-phosphate salvage; pyridoxal 5'-phosphate from pyridoxine 5'-phosphate: step 1/1. Its function is as follows. Catalyzes the oxidation of either pyridoxine 5'-phosphate (PNP) or pyridoxamine 5'-phosphate (PMP) into pyridoxal 5'-phosphate (PLP). The chain is Pyridoxine/pyridoxamine 5'-phosphate oxidase from Escherichia coli O157:H7.